We begin with the raw amino-acid sequence, 215 residues long: UPF0502 protein YceH (215 aa).

Lysine 80 is modified (N6-acetyllysine).

This sequence belongs to the UPF0502 family.

This is UPF0502 protein YceH from Shigella boydii serotype 4 (strain Sb227).